The chain runs to 302 residues: Putative S-adenosyl-L-methionine-dependent methyltransferase MMAR_1068 (302 aa).

Residues aspartate 127 and 156 to 157 (DL) contribute to the S-adenosyl-L-methionine site.

This sequence belongs to the UPF0677 family.

Its function is as follows. Exhibits S-adenosyl-L-methionine-dependent methyltransferase activity. This Mycobacterium marinum (strain ATCC BAA-535 / M) protein is Putative S-adenosyl-L-methionine-dependent methyltransferase MMAR_1068.